A 345-amino-acid polypeptide reads, in one-letter code: D-fructose 1,6-bisphosphatase class 2/sedoheptulose 1,7-bisphosphatase (345 aa).

4 residues coordinate Mn(2+): Asp-33, Glu-57, Asp-97, and Glu-100. Residues 100-102 (EGT), Tyr-131, 176-178 (RPR), and 198-200 (DGD) each bind substrate. Mn(2+) is bound at residue Glu-225.

Belongs to the FBPase class 2 family. Homotetramer. Mn(2+) is required as a cofactor.

The catalysed reaction is beta-D-fructose 1,6-bisphosphate + H2O = beta-D-fructose 6-phosphate + phosphate. The enzyme catalyses D-sedoheptulose 1,7-bisphosphate + H2O = D-sedoheptulose 7-phosphate + phosphate. Its pathway is carbohydrate biosynthesis; Calvin cycle. Inhibited by AMP and slightly innibited by hydrogen peroxyde. Its function is as follows. Catalyzes the hydrolysis of fructose 1,6-bisphosphate (Fru 1,6-P2) and sedoheptulose 1,7-bisphosphate (Sed 1,7-P2) to fructose 6-phosphate and sedoheptulose 7-phosphate, respectively. In Synechococcus elongatus (strain ATCC 33912 / PCC 7942 / FACHB-805) (Anacystis nidulans R2), this protein is D-fructose 1,6-bisphosphatase class 2/sedoheptulose 1,7-bisphosphatase.